Consider the following 405-residue polypeptide: MNRTVMMALVIIFLDAMGIGIIMPVLPALLREFVGKANVAENYGVLLALYAMMQVIFAPLLGRWSDRIGRRPVLLLSLLGATLDYALMATASVVWVLYLGRLIAGITGATGAVAASTIADVTPEESRTHWFGMMGACFGGGMIAGPVIGGFAGQLSVQAPFMFAAAINGLAFLVSLFILHETHNANQVSDELKNETINETTSSIREMISPLSGLLVVFFIIQLIGQIPATLWVLFGEERFAWDGVMVGVSLAVFGLTHALFQGLAAGFIAKHLGERKAIAVGILADGCGLFLLAVITQSWMVWPVLLLLACGGITLPALQGIISVRVGQVAQGQLQGVLTSLTHLTAVIGPLVFAFLYSATRETWNGWVWIIGCGLYVVALIILRFFHPGRVIHPINKSDVQQRI.

The next 12 helical transmembrane spans lie at 6 to 27 (MMAL…PVLP), 42 to 62 (NYGV…PLLG), 74 to 94 (LLLS…ASVV), 102 to 122 (LIAG…ADVT), 131 to 151 (FGMM…IGGF), 159 to 179 (APFM…LFIL), 215 to 235 (LVVF…WVLF), 245 to 265 (VMVG…QGLA), 278 to 298 (AIAV…VITQ), 299 to 319 (SWMV…LPAL), 337 to 357 (GVLT…FAFL), and 364 to 385 (TWNG…IILR).

The protein belongs to the major facilitator superfamily. TCR/Tet family.

It is found in the cell inner membrane. Functionally, resistance to tetracycline by an active tetracycline efflux. This is an energy-dependent process that decreases the accumulation of the antibiotic in whole cells. This protein functions as a metal-tetracycline/H(+) antiporter. This chain is Tetracycline resistance protein, class E (tetA), found in Escherichia coli.